The chain runs to 365 residues: P43 5S RNA-binding protein (365 aa).

C2H2-type zinc fingers lie at residues 15–39 (LRCPAAGCKAFYRKEGKLQDHMAGH), 45–69 (WKCGIKDCDKVFARKRQILKHVKRH), 75–100 (LSCPTAGCKMTFSTKKSLSRHKLYKH), 106–130 (LKCFVPGCKRSFRKKRALRRHLSVH), 136–160 (SVCDVPGCSWKSSSVAKLVAHQKRH), 163–187 (YRCSYEGCQTVSPTWTALQTHVKKH), 191–213 (LQCAACKKPFKKASALRRHKATH), 220–245 (LPCPRQDCDKTFSSVFNLTHHVRKLH), and 251–275 (HRCPHSGCTRSFAMRESLLRHLVVH).

In terms of assembly, the 42S RNP particle comprises four subunits each of which contains one molecule of 5S RNA, three molecules of tRNA, two molecules of p50 (EF1-alpha) and one molecule of the 5S RNA binding protein 43.

Functionally, p43 is a 5S RNA binding protein which is a major constituent of oocytes and comprises part of a 42S ribonucleoprotein storage particle. This chain is P43 5S RNA-binding protein, found in Xenopus laevis (African clawed frog).